The chain runs to 887 residues: Phosphatidylinositol 3-kinase catalytic subunit type 3 (887 aa).

The 150-residue stretch at 35–184 (YKAVLEDPML…LAKLTKAHRQ (150 aa)) folds into the C2 PI3K-type domain. The tract at residues 149–170 (VEADGSEPTRTPGRTSSTLSED) is disordered. A compositionally biased stretch (polar residues) spans 156 to 170 (PTRTPGRTSSTLSED). At Thr163 the chain carries Phosphothreonine; by AMPK. The residue at position 165 (Ser165) is a Phosphoserine; by AMPK. Phosphoserine occurs at positions 244, 261, and 282. The PIK helical domain maps to 283–520 (DHDLKPNATT…PKTHEMYLNV (238 aa)). Residues 415-466 (LEPTKKDSQTSASESLSNSGVSSGDIDSSQIITNPLPPVASPPPASKAKEVS) are disordered. The span at 425–437 (SASESLSNSGVSS) shows a compositional bias: low complexity. Over residues 449–459 (PLPPVASPPPA) the composition is skewed to pro residues. Positions 605-871 (IPETATLFKS…LIDESVHALF (267 aa)) constitute a PI3K/PI4K catalytic domain. The tract at residues 611 to 617 (LFKSALM) is G-loop. Positions 740 to 748 (GVGDRHLDN) are catalytic loop. The interval 759–780 (HIDFGYILGRDPKPLPPPMKLN) is activation loop.

Belongs to the PI3/PI4-kinase family. As to quaternary structure, component of the PI3K (PI3KC3/PI3K-III/class III phosphatidylinositol 3-kinase) complex the core of which is composed of the catalytic subunit PIK3C3, the regulatory subunit PIK3R4 and BECN1 associating with additional regulatory/auxiliary subunits to form alternative complex forms. Alternative complex forms containing a fourth regulatory subunit in a mutually exclusive manner are: the PI3K complex I (PI3KC3-C1) containing ATG14, and the PI3K complex II (PI3KC3-C2) containing UVRAG. PI3KC3-C1 displays a V-shaped architecture with PIK3R4 serving as a bridge between PIK3C3 and the ATG14:BECN1 subcomplex. Both, PI3KC3-C1 and PI3KC3-C2, can associate with further regulatory subunits such as RUBCN, SH3GLB1/Bif-1 and AMBRA1. PI3KC3-C1 probably associates with PIK3CB. Interacts with RAB7A in the presence of PIK3R4. Interacts with AMBRA1. Interacts with BECN1P1/BECN2. Interacts with SLAMF1. May be a component of a complex composed of RAB5A (in GDP-bound form), DYN2 and PIK3C3. Interacts with NCKAP1L. Interacts with ATG14; this interaction is increased in the absence of TMEM39A. Interacts with STEEP1; the interaction is STING1-dependent and required for trafficking of STING1 from the endoplasmic reticulum. Interacts with YWHAG. Interacts with ARMC3. It depends on Mn(2+) as a cofactor. Ubiquitinated via 'Lys-29'- and 'Lys-48'-linked ubiquitination by UBE3C, promoting its degradation. Deubiquitination by ZRANB1/TRABID promotes its stabilization, leading to autophagosome maturation.

The protein resides in the midbody. Its subcellular location is the late endosome. The protein localises to the cytoplasmic vesicle. It localises to the autophagosome. It catalyses the reaction a 1,2-diacyl-sn-glycero-3-phospho-(1D-myo-inositol) + ATP = a 1,2-diacyl-sn-glycero-3-phospho-(1D-myo-inositol-3-phosphate) + ADP + H(+). In terms of biological role, catalytic subunit of the PI3K complex that mediates formation of phosphatidylinositol 3-phosphate; different complex forms are believed to play a role in multiple membrane trafficking pathways: PI3KC3-C1 is involved in initiation of autophagosomes and PI3KC3-C2 in maturation of autophagosomes and endocytosis. As part of PI3KC3-C1, promotes endoplasmic reticulum membrane curvature formation prior to vesicle budding. Involved in regulation of degradative endocytic trafficking and required for the abscission step in cytokinesis, probably in the context of PI3KC3-C2. Involved in the transport of lysosomal enzyme precursors to lysosomes. Required for transport from early to late endosomes. The polypeptide is Phosphatidylinositol 3-kinase catalytic subunit type 3 (Mus musculus (Mouse)).